Reading from the N-terminus, the 95-residue chain is Large ribosomal subunit protein bL25 (95 aa).

The protein belongs to the bacterial ribosomal protein bL25 family. Part of the 50S ribosomal subunit; part of the 5S rRNA/L5/L18/L25 subcomplex. Contacts the 5S rRNA. Binds to the 5S rRNA independently of L5 and L18.

Its function is as follows. This is one of the proteins that binds to the 5S RNA in the ribosome where it forms part of the central protuberance. This Shewanella pealeana (strain ATCC 700345 / ANG-SQ1) protein is Large ribosomal subunit protein bL25.